Here is a 549-residue protein sequence, read N- to C-terminus: Endoplasmic reticulum mannosyl-oligosaccharide 1,2-alpha-mannosidase (549 aa).

The Cytoplasmic portion of the chain corresponds to 1-4; the sequence is MKNS. A helical; Signal-anchor for type II membrane protein membrane pass occupies residues 5-24; that stretch reads VGISIATIVAIIAAIYYVPW. Over 25-354 the chain is Lumenal; sequence YEHFERKSPG…LLASGSTEGL (330 aa). Residues Asn-96, Asn-155, and Asn-224 are each glycosylated (N-linked (GlcNAc...) asparagine). Cys-340 and Cys-385 are oxidised to a cystine. Glu-399 (proton donor) is an active-site residue. The cysteines at positions 468 and 471 are disulfide-linked. Thr-525 provides a ligand contact to Ca(2+).

This sequence belongs to the glycosyl hydrolase 47 family. As to quaternary structure, homodimer. Requires Ca(2+) as cofactor.

The protein localises to the endoplasmic reticulum membrane. The catalysed reaction is N(4)-(alpha-D-Man-(1-&gt;2)-alpha-D-Man-(1-&gt;2)-alpha-D-Man-(1-&gt;3)-[alpha-D-Man-(1-&gt;2)-alpha-D-Man-(1-&gt;3)-[alpha-D-Man-(1-&gt;2)-alpha-D-Man-(1-&gt;6)]-alpha-D-Man-(1-&gt;6)]-beta-D-Man-(1-&gt;4)-beta-D-GlcNAc-(1-&gt;4)-beta-D-GlcNAc)-L-asparaginyl-[protein] (N-glucan mannose isomer 9A1,2,3B1,2,3) + 4 H2O = N(4)-(alpha-D-Man-(1-&gt;3)-[alpha-D-Man-(1-&gt;3)-[alpha-D-Man-(1-&gt;6)]-alpha-D-Man-(1-&gt;6)]-beta-D-Man-(1-&gt;4)-beta-D-GlcNAc-(1-&gt;4)-beta-D-GlcNAc)-L-asparaginyl-[protein] (N-glucan mannose isomer 5A1,2) + 4 beta-D-mannose. It catalyses the reaction N(4)-(alpha-D-Man-(1-&gt;2)-alpha-D-Man-(1-&gt;2)-alpha-D-Man-(1-&gt;3)-[alpha-D-Man-(1-&gt;3)-[alpha-D-Man-(1-&gt;2)-alpha-D-Man-(1-&gt;6)]-alpha-D-Man-(1-&gt;6)]-beta-D-Man-(1-&gt;4)-beta-D-GlcNAc-(1-&gt;4)-beta-D-GlcNAc)-L-asparaginyl-[protein] (N-glucan mannose isomer 8A1,2,3B1,3) + 3 H2O = N(4)-(alpha-D-Man-(1-&gt;3)-[alpha-D-Man-(1-&gt;3)-[alpha-D-Man-(1-&gt;6)]-alpha-D-Man-(1-&gt;6)]-beta-D-Man-(1-&gt;4)-beta-D-GlcNAc-(1-&gt;4)-beta-D-GlcNAc)-L-asparaginyl-[protein] (N-glucan mannose isomer 5A1,2) + 3 beta-D-mannose. It participates in protein modification; protein glycosylation. Its function is as follows. Involved in glycoprotein quality control as it is important for the targeting of misfolded glycoproteins for degradation. It primarily trims a single alpha-1,2-linked mannose residue from Man(9)GlcNAc(2) to produce Man(8)GlcNAc(2), but at high enzyme concentrations it further trims the carbohydrates to Man(5)GlcNAc(2). This chain is Endoplasmic reticulum mannosyl-oligosaccharide 1,2-alpha-mannosidase (MNS1), found in Saccharomyces cerevisiae (strain ATCC 204508 / S288c) (Baker's yeast).